The sequence spans 1584 residues: Adhesion G protein-coupled receptor B1 (1584 aa).

The N-terminal stretch at 1-30 (MRGQAAAPGPVWILAPLLLLLLLLGRRARA) is a signal peptide. Over 31-948 (AAGADAGPGP…ANMEKATLPS (918 aa)) the chain is Extracellular. A glycan (N-linked (GlcNAc...) asparagine) is linked at N64. Residues 146–167 (RRQQPPQHDGLRPRAGPPGPTD) are disordered. The TSP type-1 1 domain maps to 261-315 (TGGWKLWSLWGECTRDCGGGLQTRTRTCLPAPGVEGGGCEGVLEEGRQCNREACG). Cystine bridges form between C273-C309, C277-C314, and C288-C299. Residues 313–335 (ACGPAGRTSSRSQSLRSTDARRR) are disordered. Residues 319 to 329 (RTSSRSQSLRS) are compositionally biased toward low complexity. TSP type-1 domains lie at 354 to 407 (DPAA…AVCP), 409 to 462 (HGAW…ALCP), 467 to 520 (DGNW…QQCP), and 522 to 575 (DGKW…QRCP). Disulfide bonds link C366–C400, C370–C406, C381–C390, C421–C456, C425–C461, C436–C446, C479–C514, C483–C519, C494–C504, C534–C569, C538–C574, C549–C559, C581–C616, and C604–C634. N-linked (GlcNAc...) asparagine glycosylation occurs at N401. N607 carries an N-linked (GlcNAc...) asparagine glycan. The residue at position 609 (T609) is a Phosphothreonine. N-linked (GlcNAc...) asparagine glycosylation is found at N692, N844, N877, and N881. One can recognise a GAIN-B domain in the interval 760-939 (RDAYQVTDNL…AILAQLSADA (180 aa)). Cystine bridges form between C884-C921 and C909-C923. Residues 884 to 939 (CILWDETDVPSSSAPPQLGPWSWRGCRTVPLDALRTRCLCDRLSTFAILAQLSADA) are GPS. Positions 927–943 (STFAILAQLSADANMEK) are N-terminal stalk following vasculostatin-120 cleavage which is not required for signaling activity. Residues 949-969 (VTLIVGCGVSSLTLLMLVIIY) traverse the membrane as a helical segment. The Cytoplasmic segment spans residues 970-980 (VSVWRYIRSER). The chain crosses the membrane as a helical span at residues 981 to 1001 (SVILINFCLSIISSNALILIG). Over 1002–1008 (QTQTRNK) the chain is Extracellular. A helical transmembrane segment spans residues 1009 to 1029 (VVCTLVAAFLHFFFLSSFCWV). Over 1030–1052 (LTEAWQSYMAVTGHLRNRLIRKR) the chain is Cytoplasmic. The helical transmembrane segment at 1053 to 1073 (FLCLGWGLPALVVAISVGFTK) threads the bilayer. Residues 1074–1093 (AKGYSTMNYCWLSLEGGLLY) are Extracellular-facing. Residues 1094–1114 (AFVGPAAAVVLVNMVIGILVF) form a helical membrane-spanning segment. At 1115 to 1136 (NKLVSKDGITDKKLKERAGASL) the chain is on the cytoplasmic side. A helical membrane pass occupies residues 1137–1157 (WSSCVVLPLLALTWMSAVLAV). Residues 1158–1166 (TDRRSALFQ) lie on the Extracellular side of the membrane. A helical transmembrane segment spans residues 1167-1187 (ILFAVFDSLEGFVIVMVHCIL). The Cytoplasmic portion of the chain corresponds to 1188–1584 (RREVQDAVKC…QDIIDLQTEV (397 aa)). Residues 1365–1584 (YSIHIDQMPQ…QDIIDLQTEV (220 aa)) are involved in interaction with MAGI1. Disordered stretches follow at residues 1385 to 1475 (EASL…RRKS) and 1501 to 1548 (RKLQ…KKEL). The span at 1391–1439 (RSPPSRQPPSGGPPEAPPAQPPPPPPPPPPPPQQPLPPPPNLEPAPPSL) shows a compositional bias: pro residues. A compositionally biased stretch (polar residues) spans 1453 to 1469 (TGPSTKNENVATLSVSS). S1469 carries the phosphoserine modification. Residues 1501–1522 (RKLQHAAEKDKEVLGPDSKPEK) are compositionally biased toward basic and acidic residues. Residues 1581 to 1584 (QTEV) form an indispensable for interaction with MAGI1 region.

It belongs to the G-protein coupled receptor 2 family. LN-TM7 subfamily. Interacts with ELMO1 and DOCK. When bound to ELMO1 and DOCK1, acts as a module to promote apoptotic cell engulfment. Interacts with MDM2; the interaction results in inhibition of MDM2-mediated ubiquitination and degradation of DLG4/PSD95. Interacts with PARD3 and TIAM1; the interaction is required for correct dendritic. localization of PARD3 and TIAM1 and for dendritic spine formation. Interacts with MAGI1. Interacts with MAGI3. Interacts with BAIAP2. Interacts with PHYHIP. Interacts with DLG4 (via PDZ domain). Vasculostatin-120: Interacts with CD36. Vasculostatin-120: Interacts with ARRB2. Interacts with BAIAP3; this interaction is direct. In terms of processing, proteolytically cleaved to produce vasculostatin-40 and vasculostatin-120. Vasculostatin-40 is the major form and is produced through proteolytic cleavage by MMP14 between residues 321 and 329 with cleavage likely to be between Ser-326 and Leu-327. Post-translationally, ubiquitinated. As to expression, expressed in brain (at protein level). Expressed on mononuclear phagocytes and monocyte-derived macrophages in the gastric mucosa (at protein level). Expressed in normal pancreatic tissue but not in pancreatic tumor tissue. Reduced or no expression is observed in some glioblastomas.

The protein resides in the cell membrane. It localises to the cell projection. The protein localises to the phagocytic cup. It is found in the cell junction. Its subcellular location is the focal adhesion. The protein resides in the dendritic spine. It localises to the postsynaptic density. The protein localises to the secreted. Functionally, phosphatidylserine receptor which enhances the engulfment of apoptotic cells. Also mediates the binding and engulfment of Gram-negative bacteria. Stimulates production of reactive oxygen species by macrophages in response to Gram-negative bacteria, resulting in enhanced microbicidal macrophage activity. In the gastric mucosa, required for recognition and engulfment of apoptotic gastric epithelial cells. Promotes myoblast fusion. Activates the Rho pathway in a G-protein-dependent manner. Inhibits MDM2-mediated ubiquitination and degradation of DLG4/PSD95, promoting DLG4 stability and regulating synaptic plasticity. Required for the formation of dendritic spines by ensuring the correct localization of PARD3 and TIAM1. Potent inhibitor of angiogenesis in brain and may play a significant role as a mediator of the p53/TP53 signal in suppression of glioblastoma. In terms of biological role, inhibits angiogenesis in a CD36-dependent manner. Inhibits angiogenesis. This chain is Adhesion G protein-coupled receptor B1, found in Homo sapiens (Human).